Consider the following 152-residue polypeptide: 3-dehydroquinate dehydratase (152 aa).

Residue Y26 is the Proton acceptor of the active site. Substrate contacts are provided by N77, H83, and D90. Catalysis depends on H103, which acts as the Proton donor. Residues 104–105 (LS) and R114 each bind substrate.

This sequence belongs to the type-II 3-dehydroquinase family. As to quaternary structure, homododecamer.

It catalyses the reaction 3-dehydroquinate = 3-dehydroshikimate + H2O. Its pathway is metabolic intermediate biosynthesis; chorismate biosynthesis; chorismate from D-erythrose 4-phosphate and phosphoenolpyruvate: step 3/7. Catalyzes a trans-dehydration via an enolate intermediate. The chain is 3-dehydroquinate dehydratase (aroQ) from Synechocystis sp. (strain ATCC 27184 / PCC 6803 / Kazusa).